The following is a 304-amino-acid chain: Putative S-adenosyl-L-methionine-dependent methyltransferase MAP_3385 (304 aa).

S-adenosyl-L-methionine-binding positions include aspartate 129 and 158–159; that span reads DL.

This sequence belongs to the UPF0677 family.

In terms of biological role, exhibits S-adenosyl-L-methionine-dependent methyltransferase activity. The polypeptide is Putative S-adenosyl-L-methionine-dependent methyltransferase MAP_3385 (Mycolicibacterium paratuberculosis (strain ATCC BAA-968 / K-10) (Mycobacterium paratuberculosis)).